Here is a 136-residue protein sequence, read N- to C-terminus: Small ribosomal subunit protein uS11 (136 aa).

The protein belongs to the universal ribosomal protein uS11 family. As to quaternary structure, part of the 30S ribosomal subunit. Interacts with proteins S7 and S18. Binds to IF-3.

Its function is as follows. Located on the platform of the 30S subunit, it bridges several disparate RNA helices of the 16S rRNA. Forms part of the Shine-Dalgarno cleft in the 70S ribosome. The sequence is that of Small ribosomal subunit protein uS11 from Leptospira borgpetersenii serovar Hardjo-bovis (strain JB197).